A 156-amino-acid chain; its full sequence is Ribosome maturation factor RimP (156 aa).

The protein belongs to the RimP family.

The protein localises to the cytoplasm. Required for maturation of 30S ribosomal subunits. This is Ribosome maturation factor RimP from Halalkalibacterium halodurans (strain ATCC BAA-125 / DSM 18197 / FERM 7344 / JCM 9153 / C-125) (Bacillus halodurans).